A 160-amino-acid polypeptide reads, in one-letter code: Transcriptional repressor NrdR (160 aa).

Residues 3 to 34 fold into a zinc finger; that stretch reads CPYCQCEDTQVKDSRPAEEGAVIRRRRVCSVC. Residues 49–139 form the ATP-cone domain; that stretch reads LLVLKKSGRR…VYRDFRNASD (91 aa).

This sequence belongs to the NrdR family. Zn(2+) serves as cofactor.

Functionally, negatively regulates transcription of bacterial ribonucleotide reductase nrd genes and operons by binding to NrdR-boxes. This chain is Transcriptional repressor NrdR, found in Bartonella bacilliformis (strain ATCC 35685 / KC583 / Herrer 020/F12,63).